The chain runs to 561 residues: MCGIWALFGSDDCLSVQCLSAMKIAHRGPDAFRFENVNGYTNCCFGFHRLAVVDPLFGMQPIRVKKYPYLWLCYNGEIYNHKALQQRFEFEYQTNVDGEIILHLYDKGGIEQTICMLDGVFAFILLDTANKKVFLGRDTYGVRPLFKAMTEDGFLAVCSEAKGLVSLKHSTTPFLKVEPFLPGHYEVLDLKPNGKVASVEMVKYHHCRDEPLHALYDSVEKLFQGFELETVKSNLRILFDSAVRKRLMTDRRIGCLLSGGLDSSLVAASLLKQLKEAQVQYPLQTFAIGMEDSPDLLAARKVANYIGSEHHEVLFNSEEGIQALDEVIFSLETYDITTVRASVGMYLISKYIRKNTDSVVIFSGEGSDELTQGYIYFHKAPSPEKAEEESERLLKELYLFDVLRADRTTAAHGLELRVPFLDHRFSSYYLSLPPEMRIPKNGIEKHLLRETFEDSNLLPKEILWRPKEAFSDGITSVKNSWFKILQDYVEHQVDDEMMATAAQKFPFNTPKTKEGYYYRQIFERHYPGRADWLTHYWMPKWINATDPSARTLTHYKSAAKA.

The active-site For GATase activity is cysteine 2. In terms of domain architecture, Glutamine amidotransferase type-2 spans cysteine 2–lysine 191. L-glutamine contacts are provided by residues arginine 49–valine 53, asparagine 75–glutamate 77, and aspartate 97. An Asparagine synthetase domain is found at histidine 213 to tyrosine 536. ATP contacts are provided by residues leucine 256, isoleucine 288, and serine 363–glycine 364. At lysine 385 the chain carries N6-acetyllysine. Phosphothreonine is present on threonine 545. Serine 557 carries the phosphoserine modification.

The enzyme catalyses L-aspartate + L-glutamine + ATP + H2O = L-asparagine + L-glutamate + AMP + diphosphate + H(+). It functions in the pathway amino-acid biosynthesis; L-asparagine biosynthesis; L-asparagine from L-aspartate (L-Gln route): step 1/1. The chain is Asparagine synthetase [glutamine-hydrolyzing] (ASNS) from Cricetulus griseus (Chinese hamster).